The following is a 199-amino-acid chain: Proteasome subunit beta type-2-B (199 aa).

The residue at position 1 (M1) is an N-acetylmethionine.

The protein belongs to the peptidase T1B family. In terms of assembly, component of the 20S core complex of the 26S proteasome. The 26S proteasome is composed of a core protease (CP), known as the 20S proteasome, capped at one or both ends by the 19S regulatory particle (RP/PA700). The 20S proteasome core is composed of 28 subunits that are arranged in four stacked rings, resulting in a barrel-shaped structure. The two end rings are each formed by seven alpha subunits, and the two central rings are each formed by seven beta subunits. The catalytic chamber with the active sites is on the inside of the barrel. Ubiquitous low levels, higher expression in siliques and flowers.

The protein resides in the cytoplasm. It localises to the nucleus. In terms of biological role, non-catalytic component of the proteasome, a multicatalytic proteinase complex which is characterized by its ability to cleave peptides with Arg, Phe, Tyr, Leu, and Glu adjacent to the leaving group at neutral or slightly basic pH. The proteasome has an ATP-dependent proteolytic activity. This is Proteasome subunit beta type-2-B (PBD2) from Arabidopsis thaliana (Mouse-ear cress).